Reading from the N-terminus, the 460-residue chain is Glutamate--tRNA ligase 2 (460 aa).

Residues 8-18 (PSPTGFLHVGG) carry the 'HIGH' region motif. The 'KMSKS' region signature appears at 237 to 241 (KLSKR). K240 provides a ligand contact to ATP.

It belongs to the class-I aminoacyl-tRNA synthetase family. Glutamate--tRNA ligase type 1 subfamily. In terms of assembly, monomer.

Its subcellular location is the cytoplasm. It carries out the reaction tRNA(Glu) + L-glutamate + ATP = L-glutamyl-tRNA(Glu) + AMP + diphosphate. In terms of biological role, catalyzes the attachment of glutamate to tRNA(Glu) in a two-step reaction: glutamate is first activated by ATP to form Glu-AMP and then transferred to the acceptor end of tRNA(Glu). In Campylobacter fetus subsp. fetus (strain 82-40), this protein is Glutamate--tRNA ligase 2.